We begin with the raw amino-acid sequence, 201 residues long: Fimbrial protein FimX (201 aa).

Residues 1–21 form the signal peptide; that stretch reads MQAKTFLLGAALAGVALAAHA. The cysteines at positions 37 and 79 are disulfide-linked.

It belongs to the fimbrial protein family.

The protein localises to the fimbrium. Functionally, bordetella pertussis is the causative agent of whooping cough. An essential step in the disease process is the attachment of the bacteria to the ciliated epithelium of the respiratory tract, enabling the organism to resist normal host-clearance mechanisms. It is unclear which bacterial cell surface component are responsible for adherence but the fimbriae of B.pertussis are prime candidates for being involved in this process. This chain is Fimbrial protein FimX (fimX), found in Bordetella pertussis (strain Tohama I / ATCC BAA-589 / NCTC 13251).